Consider the following 341-residue polypeptide: UDP-glucose 4-epimerase (341 aa).

It belongs to the polysaccharide synthase family.

The catalysed reaction is UDP-alpha-D-glucose = UDP-alpha-D-galactose. Functionally, epimerizes UDP-galactose to UDP-glucose. This is UDP-glucose 4-epimerase (capD) from Rickettsia akari (strain Hartford).